A 547-amino-acid polypeptide reads, in one-letter code: CAP-Gly domain-containing linker protein 3 (547 aa).

Residues 1-49 are disordered; the sequence is MTKTDPAPMAPPPRGEEEEEEEEDEPVPEAPSPTQERRQKPVVHPSAPA. Residues 16–27 show a composition bias toward acidic residues; that stretch reads EEEEEEEEDEPV. ANK repeat units follow at residues 117–158, 160–191, and 197–229; these read TDMT…LRSR, TNMN…VVNS, and NHGS…LRNR. A CAP-Gly 1 domain is found at 314–356; that stretch reads GTTEFASGQWVGVELDEPEGKNDGSVGGVRYFICPPKQGLFAS. Residues 365 to 413 are disordered; that stretch reads DAPPSSVTSTPRTPRMDFSRVTGKGRREHKGKKKSPSSPSLGSLQQREG. Residues 367 to 377 show a composition bias toward low complexity; that stretch reads PPSSVTSTPRT. Thr-374 is subject to Phosphothreonine. Over residues 387 to 399 the composition is skewed to basic residues; sequence GKGRREHKGKKKS. 2 positions are modified to phosphoserine: Ser-399 and Ser-401. The 43-residue stretch at 436–478 folds into the CAP-Gly 2 domain; it reads GKTDFAPGYWYGIELDQPTGKHDGSVFGVRYFTCAPRHGVFAP. A goLD region spans residues 488 to 547; that stretch reads STDPPGDSVGAKKVHQVTMTQPKRTFTTVRTPKDIASENSISRLLFCCWFPWMLRAEMQS. Residues Cys-534 and Cys-535 are each lipidated (S-palmitoyl cysteine).

As to quaternary structure, homodimer. Interacts with AKT1 and AKT2; when AKT1 and AKT2 are phosphorylated and activated, affinity is higher for AKT2. Interacts with ZDHHC13 (via ANK repeats). Interacts with ZDHHC17 (via ANK repeats). In terms of processing, palmitoylation by ZDHHC17 regulates association with the plasma membrane.

The protein localises to the cell membrane. It is found in the cytoplasm. It localises to the golgi apparatus. Its subcellular location is the golgi stack. Functions as a cytoplasmic linker protein. Involved in TGN-endosome dynamics. May modulate the cellular compartmentalization of AKT kinase family and promote its cell membrane localization, thereby playing a role in glucose transport in adipocytes. The protein is CAP-Gly domain-containing linker protein 3 (Clip3) of Mus musculus (Mouse).